Reading from the N-terminus, the 78-residue chain is UPF0291 protein Exig_1097 (78 aa).

Positions 57 to 78 (EEGTDVTPEKLKQAQEEERNKQ) are disordered. Over residues 63–78 (TPEKLKQAQEEERNKQ) the composition is skewed to basic and acidic residues.

Belongs to the UPF0291 family.

It is found in the cytoplasm. The chain is UPF0291 protein Exig_1097 from Exiguobacterium sibiricum (strain DSM 17290 / CCUG 55495 / CIP 109462 / JCM 13490 / 255-15).